We begin with the raw amino-acid sequence, 851 residues long: Protein FAM13B (851 aa).

One can recognise a Rho-GAP domain in the interval 23 to 212 (IPLDELQQGG…GLLENYYEFF (190 aa)). Basic and acidic residues predominate over residues 556–565 (IKDAKHKNSD). Residues 556-611 (IKDAKHKNSDGEFAPQTRPRSNTLPKSFGSSLDHEDGESEGEPRVIQKEKTPSKEA) form a disordered region. Polar residues predominate over residues 573–585 (RPRSNTLPKSFGS). Over residues 596 to 611 (GEPRVIQKEKTPSKEA) the composition is skewed to basic and acidic residues.

It belongs to the FAM13 family.

The protein is Protein FAM13B (Fam13b) of Mus musculus (Mouse).